The chain runs to 337 residues: Phenylalanine--tRNA ligase alpha subunit (337 aa).

Position 252 (Glu252) interacts with Mg(2+).

Belongs to the class-II aminoacyl-tRNA synthetase family. Phe-tRNA synthetase alpha subunit type 1 subfamily. In terms of assembly, tetramer of two alpha and two beta subunits. Requires Mg(2+) as cofactor.

It localises to the cytoplasm. The enzyme catalyses tRNA(Phe) + L-phenylalanine + ATP = L-phenylalanyl-tRNA(Phe) + AMP + diphosphate + H(+). The sequence is that of Phenylalanine--tRNA ligase alpha subunit from Cellvibrio japonicus (strain Ueda107) (Pseudomonas fluorescens subsp. cellulosa).